The chain runs to 65 residues: Hirudin-3A' (65 aa).

Positions 1 to 3 (VVY) are interaction with thrombin active site. 3 disulfides stabilise this stretch: Cys-6–Cys-14, Cys-16–Cys-28, and Cys-22–Cys-39. A disordered region spans residues 32 to 65 (SDGEKNECVTGEGTPKPQSHNDGDFEEIPEEYLQ). Thr-45 carries an O-linked (GalNAc...) threonine glycan. Residues 55–65 (DFEEIPEEYLQ) form an interaction with fibrinogen-binding exosite of thrombin region. Residues 55 to 65 (DFEEIPEEYLQ) show a composition bias toward acidic residues. Tyr-63 carries the sulfotyrosine modification.

It belongs to the protease inhibitor I14 (hirudin) family.

The protein resides in the secreted. Functionally, hirudin is a potent thrombin-specific protease inhibitor. It forms a stable non-covalent complex with alpha-thrombin, thereby abolishing its ability to cleave fibrinogen. This chain is Hirudin-3A', found in Hirudo medicinalis (Medicinal leech).